Here is a 163-residue protein sequence, read N- to C-terminus: uncharacterized protein (163 aa).

At 1 to 33 (MKTLDKITNYDLFDFADEFLKFVPVFRPNPTVT) the chain is on the cytoplasmic side. The helical transmembrane segment at 34-54 (CLFGNPLTNLLVNGTGAACFF) threads the bilayer. Residues 55-117 (EFCSLALIKV…SLGMALPDDD (63 aa)) are Extracellular-facing. A helical membrane pass occupies residues 118 to 138 (VLLSITFWFLCNSSFSILFVF). Residues 139-163 (ELRIFLRTVNNLLVVFLSVLKRNDL) lie on the Cytoplasmic side of the membrane.

Its subcellular location is the membrane. This is an uncharacterized protein from Saccharomyces cerevisiae (strain ATCC 204508 / S288c) (Baker's yeast).